Reading from the N-terminus, the 830-residue chain is DNA helicase MCM8 (830 aa).

The region spanning 394–601 is the MCM domain; it reads LFRIIVNSLC…DHDHLLSEHV (208 aa). 446-453 is a binding site for ATP; it reads GDPGLGKS.

It belongs to the MCM family. In terms of assembly, component of the MCM8-MCM9 complex, which forms a hexamer composed of MCM8 and MCM9.

The protein localises to the nucleus. The enzyme catalyses ATP + H2O = ADP + phosphate + H(+). Functionally, component of the MCM8-MCM9 complex, a complex involved in homologous recombination repair following DNA interstrand cross-links and plays a key role during gametogenesis. The MCM8-MCM9 complex probably acts as a hexameric helicase required to process aberrant forks into homologous recombination substrates and to orchestrate homologous recombination with resection, fork stabilization and fork restart. This chain is DNA helicase MCM8 (MCM8), found in Gallus gallus (Chicken).